Consider the following 130-residue polypeptide: Fluoride-specific ion channel FluC 2 (130 aa).

4 consecutive transmembrane segments (helical) span residues 4 to 24 (GLST…GAIC), 38 to 58 (NLWG…FFLA), 72 to 92 (LYLL…SLIL), and 103 to 123 (WMEL…FISL). Residues Gly82 and Ser85 each contribute to the Na(+) site.

Belongs to the fluoride channel Fluc/FEX (TC 1.A.43) family.

It localises to the cell inner membrane. The enzyme catalyses fluoride(in) = fluoride(out). With respect to regulation, na(+) is not transported, but it plays an essential structural role and its presence is essential for fluoride channel function. Functionally, fluoride-specific ion channel. Important for reducing fluoride concentration in the cell, thus reducing its toxicity. The polypeptide is Fluoride-specific ion channel FluC 2 (Prochlorococcus marinus (strain SARG / CCMP1375 / SS120)).